A 351-amino-acid polypeptide reads, in one-letter code: Dihydroorotate dehydrogenase (quinone) (351 aa).

FMN contacts are provided by residues 67–71 (AGFDK) and T91. A substrate-binding site is contributed by K71. A substrate-binding site is contributed by 116–120 (NAMGF). FMN contacts are provided by N145 and N178. N178 serves as a coordination point for substrate. S181 functions as the Nucleophile in the catalytic mechanism. N183 contacts substrate. Residues K214 and T242 each contribute to the FMN site. 243–244 (NT) contributes to the substrate binding site. FMN contacts are provided by residues G262, G291, and 312 to 313 (YS).

Belongs to the dihydroorotate dehydrogenase family. Type 2 subfamily. Monomer. FMN is required as a cofactor.

It is found in the cell membrane. The catalysed reaction is (S)-dihydroorotate + a quinone = orotate + a quinol. It participates in pyrimidine metabolism; UMP biosynthesis via de novo pathway; orotate from (S)-dihydroorotate (quinone route): step 1/1. Catalyzes the conversion of dihydroorotate to orotate with quinone as electron acceptor. In Helicobacter pylori (strain P12), this protein is Dihydroorotate dehydrogenase (quinone).